The following is a 466-amino-acid chain: Soluble pyridine nucleotide transhydrogenase (466 aa).

36–45 (ERYHQVGGGC) serves as a coordination point for FAD.

The protein belongs to the class-I pyridine nucleotide-disulfide oxidoreductase family. The cofactor is FAD.

Its subcellular location is the cytoplasm. It carries out the reaction NAD(+) + NADPH = NADH + NADP(+). Functionally, conversion of NADPH, generated by peripheral catabolic pathways, to NADH, which can enter the respiratory chain for energy generation. This is Soluble pyridine nucleotide transhydrogenase from Colwellia psychrerythraea (strain 34H / ATCC BAA-681) (Vibrio psychroerythus).